Consider the following 619-residue polypeptide: Dihydroxy-acid dehydratase (619 aa).

Asp-81 contacts Mg(2+). Cys-122 contacts [2Fe-2S] cluster. Residues Asp-123 and Lys-124 each coordinate Mg(2+). At Lys-124 the chain carries N6-carboxylysine. Cys-195 is a [2Fe-2S] cluster binding site. A Mg(2+)-binding site is contributed by Glu-494. Ser-520 serves as the catalytic Proton acceptor.

Belongs to the IlvD/Edd family. In terms of assembly, homodimer. [2Fe-2S] cluster serves as cofactor. The cofactor is Mg(2+).

The catalysed reaction is (2R)-2,3-dihydroxy-3-methylbutanoate = 3-methyl-2-oxobutanoate + H2O. It catalyses the reaction (2R,3R)-2,3-dihydroxy-3-methylpentanoate = (S)-3-methyl-2-oxopentanoate + H2O. It participates in amino-acid biosynthesis; L-isoleucine biosynthesis; L-isoleucine from 2-oxobutanoate: step 3/4. It functions in the pathway amino-acid biosynthesis; L-valine biosynthesis; L-valine from pyruvate: step 3/4. Functions in the biosynthesis of branched-chain amino acids. Catalyzes the dehydration of (2R,3R)-2,3-dihydroxy-3-methylpentanoate (2,3-dihydroxy-3-methylvalerate) into 2-oxo-3-methylpentanoate (2-oxo-3-methylvalerate) and of (2R)-2,3-dihydroxy-3-methylbutanoate (2,3-dihydroxyisovalerate) into 2-oxo-3-methylbutanoate (2-oxoisovalerate), the penultimate precursor to L-isoleucine and L-valine, respectively. The chain is Dihydroxy-acid dehydratase from Shewanella sp. (strain MR-4).